Consider the following 260-residue polypeptide: Pyridoxine 5'-phosphate synthase (260 aa).

Positions 10 and 21 each coordinate 3-amino-2-oxopropyl phosphate. His-46 acts as the Proton acceptor in catalysis. 1-deoxy-D-xylulose 5-phosphate-binding residues include Arg-48 and His-53. Glu-76 (proton acceptor) is an active-site residue. Thr-113 contributes to the 1-deoxy-D-xylulose 5-phosphate binding site. The active-site Proton donor is His-204. Residues Asp-205 and 227 to 228 (GH) each bind 3-amino-2-oxopropyl phosphate.

It belongs to the PNP synthase family. As to quaternary structure, homooctamer; tetramer of dimers.

Its subcellular location is the cytoplasm. It catalyses the reaction 3-amino-2-oxopropyl phosphate + 1-deoxy-D-xylulose 5-phosphate = pyridoxine 5'-phosphate + phosphate + 2 H2O + H(+). It participates in cofactor biosynthesis; pyridoxine 5'-phosphate biosynthesis; pyridoxine 5'-phosphate from D-erythrose 4-phosphate: step 5/5. Functionally, catalyzes the complicated ring closure reaction between the two acyclic compounds 1-deoxy-D-xylulose-5-phosphate (DXP) and 3-amino-2-oxopropyl phosphate (1-amino-acetone-3-phosphate or AAP) to form pyridoxine 5'-phosphate (PNP) and inorganic phosphate. The sequence is that of Pyridoxine 5'-phosphate synthase from Xylella fastidiosa (strain M23).